The sequence spans 993 residues: DNA-binding protein SMUBP-2 (993 aa).

Position 2 is an N-acetylalanine (Ala2). ATP contacts are provided by residues 213-220 (GPPGTGKT), Gln402, Tyr441, and Glu570. An SS DNA-binding region spans residues 637-783 (TAFEYLDDIV…KARHITVSRR (147 aa)). 3 disordered regions span residues 650–723 (YTHE…GPDR), 765–815 (LRHD…EPVT), and 837–872 (RQQSSQAQTAKGQPGGDSRPQKASQKKKKKEPKGPV). Polar residues-rich tracts occupy residues 667–683 (PSTSIRKPASDQESGQE) and 703–716 (HVQSQHSSSANGSD). One can recognise an R3H domain in the interval 721–784 (PDRTEHFRAT…ARHITVSRRS (64 aa)). A compositionally biased stretch (basic and acidic residues) spans 765 to 775 (LRHDSTGEGKA). The segment covering 784 to 794 (SPASSGSVAPQ) has biased composition (low complexity). Phosphoserine is present on residues Ser797 and Ser800. Positions 837-847 (RQQSSQAQTAK) are enriched in polar residues. The Nuclear localization signal motif lies at 862–866 (KKKKK). The segment at 889-938 (VKADNTCSFSKCSVSTTTLGQFCMHCSHRYYLSHHLPEIHGCGEKARAHA) adopts an AN1-type; degenerate zinc-finger fold. Cys911, Cys914, His928, and Cys930 together coordinate Zn(2+). Residues 953–993 (GTKDRALDPAKRAQLQRRLDKKLGELSSQRTSRKKEKERGT) are disordered. Basic and acidic residues predominate over residues 954–976 (TKDRALDPAKRAQLQRRLDKKLG).

This sequence belongs to the DNA2/NAM7 helicase family. In terms of assembly, homooligomer. Interacts with RUVBL1. Interacts with RUVBL2. Interacts with GTF3C1. Interacts with ABT1. Interacts with ribosomes. As to expression, in all tissues examined.

Its subcellular location is the nucleus. The protein localises to the cytoplasm. It localises to the cell projection. The protein resides in the axon. The catalysed reaction is ATP + H2O = ADP + phosphate + H(+). 5' to 3' helicase that unwinds RNA and DNA duplexes in an ATP-dependent reaction. Specific to 5'-phosphorylated single-stranded guanine-rich sequences. May play a role in RNA metabolism, ribosome biogenesis or initiation of translation. May play a role in regulation of transcription. Interacts with tRNA-Tyr. This Mus musculus (Mouse) protein is DNA-binding protein SMUBP-2 (Ighmbp2).